Reading from the N-terminus, the 650-residue chain is DNA ligase (650 aa).

NAD(+)-binding positions include 30 to 34 (DEEYD), 79 to 80 (SL), and Asp108. Lys110 functions as the N6-AMP-lysine intermediate in the catalytic mechanism. 3 residues coordinate NAD(+): Arg131, Glu165, and Lys304. Cys398, Cys401, Cys414, and Cys419 together coordinate Zn(2+). A BRCT domain is found at 573–650 (PQDSPIAGKS…EEELGEILES (78 aa)).

It belongs to the NAD-dependent DNA ligase family. LigA subfamily. Mg(2+) serves as cofactor. The cofactor is Mn(2+).

It carries out the reaction NAD(+) + (deoxyribonucleotide)n-3'-hydroxyl + 5'-phospho-(deoxyribonucleotide)m = (deoxyribonucleotide)n+m + AMP + beta-nicotinamide D-nucleotide.. In terms of biological role, DNA ligase that catalyzes the formation of phosphodiester linkages between 5'-phosphoryl and 3'-hydroxyl groups in double-stranded DNA using NAD as a coenzyme and as the energy source for the reaction. It is essential for DNA replication and repair of damaged DNA. The polypeptide is DNA ligase (Wolinella succinogenes (strain ATCC 29543 / DSM 1740 / CCUG 13145 / JCM 31913 / LMG 7466 / NCTC 11488 / FDC 602W) (Vibrio succinogenes)).